Reading from the N-terminus, the 874-residue chain is Mannuronan C5-epimerase AlgE6 (874 aa).

PbH1 repeat units follow at residues 133–155 (DRNVTIERVEVREMSGYGFDPHE), 157–179 (TINLVLRDSVAHHNGLDGFVADY), 180–202 (QIGGTFENNVAYANDRHGFNIVT), 204–226 (TNDFVMRNNVAYGNGGNGLVVQR), 234–256 (PENILIDGGSYYDNGLEGVLVKM), 257–279 (SNNVTVQNADIHGNGSSGVRVYG), 280–302 (AQGVQILGNQIHDNAKTAVAPEV), and 320–351 (TLNTRVEGNTITGSANSTYGVQERNDGTDFSS). 7 Hemolysin-type calcium-binding repeats span residues 383–394 (GTDGNDVLIGSD), 401–417 (GGAGDDRLDGGAGDDLL), 419–435 (GGAGRDRLTGGLGADTF), 562–578 (GGGGADQLYGYGGGDLL), 580–596 (GGAGRDRLTGGEGADTF), 723–739 (GGGGADQLYGYAGNDLL), and 741–757 (GGAGRDKLSGGEGADTF). Positions 401-420 (GGAGDDRLDGGAGDDLLDGG) are disordered.

It belongs to the D-mannuronate C5-epimerase family. Ca(2+) is required as a cofactor.

Its subcellular location is the secreted. The catalysed reaction is [(1-&gt;4)-beta-D-mannuronosyl](n) = [alginate](n). It functions in the pathway glycan biosynthesis; alginate biosynthesis. With respect to regulation, inhibited by zinc. Its function is as follows. Converts beta-D-mannuronic acid (M) to alpha-L-guluronic acid (G), producing a polymer with gel-forming capacity, required for the formation of the cyst coat. The polypeptide is Mannuronan C5-epimerase AlgE6 (Azotobacter vinelandii).